The primary structure comprises 344 residues: Holliday junction branch migration complex subunit RuvB (344 aa).

A large ATPase domain (RuvB-L) region spans residues 1–183 (MLDERLISSH…FGISCRLDFY (183 aa)). ATP-binding positions include I22, R23, G64, K67, T68, T69, 130 to 132 (EDY), R173, Y183, and R220. A Mg(2+)-binding site is contributed by T68. Residues 184 to 254 (TPLELSEIIL…LAKWALEMLE (71 aa)) are small ATPAse domain (RuvB-S). Positions 257–344 (ECGLDVMDRM…LEGKGLFSDA (88 aa)) are head domain (RuvB-H). K312 and R317 together coordinate DNA.

This sequence belongs to the RuvB family. In terms of assembly, homohexamer. Forms an RuvA(8)-RuvB(12)-Holliday junction (HJ) complex. HJ DNA is sandwiched between 2 RuvA tetramers; dsDNA enters through RuvA and exits via RuvB. An RuvB hexamer assembles on each DNA strand where it exits the tetramer. Each RuvB hexamer is contacted by two RuvA subunits (via domain III) on 2 adjacent RuvB subunits; this complex drives branch migration. In the full resolvosome a probable DNA-RuvA(4)-RuvB(12)-RuvC(2) complex forms which resolves the HJ.

It localises to the cytoplasm. It catalyses the reaction ATP + H2O = ADP + phosphate + H(+). Its function is as follows. The RuvA-RuvB-RuvC complex processes Holliday junction (HJ) DNA during genetic recombination and DNA repair, while the RuvA-RuvB complex plays an important role in the rescue of blocked DNA replication forks via replication fork reversal (RFR). RuvA specifically binds to HJ cruciform DNA, conferring on it an open structure. The RuvB hexamer acts as an ATP-dependent pump, pulling dsDNA into and through the RuvAB complex. RuvB forms 2 homohexamers on either side of HJ DNA bound by 1 or 2 RuvA tetramers; 4 subunits per hexamer contact DNA at a time. Coordinated motions by a converter formed by DNA-disengaged RuvB subunits stimulates ATP hydrolysis and nucleotide exchange. Immobilization of the converter enables RuvB to convert the ATP-contained energy into a lever motion, pulling 2 nucleotides of DNA out of the RuvA tetramer per ATP hydrolyzed, thus driving DNA branch migration. The RuvB motors rotate together with the DNA substrate, which together with the progressing nucleotide cycle form the mechanistic basis for DNA recombination by continuous HJ branch migration. Branch migration allows RuvC to scan DNA until it finds its consensus sequence, where it cleaves and resolves cruciform DNA. The polypeptide is Holliday junction branch migration complex subunit RuvB (Syntrophomonas wolfei subsp. wolfei (strain DSM 2245B / Goettingen)).